The chain runs to 237 residues: Ribosomal RNA small subunit methyltransferase G (237 aa).

S-adenosyl-L-methionine is bound by residues glycine 78, phenylalanine 83, alanine 129–glutamate 130, and arginine 148.

This sequence belongs to the methyltransferase superfamily. RNA methyltransferase RsmG family.

The protein resides in the cytoplasm. Its function is as follows. Specifically methylates the N7 position of a guanine in 16S rRNA. This chain is Ribosomal RNA small subunit methyltransferase G, found in Streptococcus pyogenes serotype M4 (strain MGAS10750).